Here is a 308-residue protein sequence, read N- to C-terminus: Isoaspartyl peptidase/L-asparaginase (308 aa).

Met-1 carries the post-translational modification N-acetylmethionine. Catalysis depends on Thr-168, which acts as the Nucleophile. Residues Arg-196–Asp-199 and Thr-219–Gly-222 contribute to the substrate site.

The protein belongs to the Ntn-hydrolase family. Heterodimer of an alpha and beta chain produced by autocleavage. This heterodimer may then dimerize in turn, giving rise to a heterotetramer. Post-translationally, cleaved into an alpha and beta chain by autocatalysis; this activates the enzyme. The N-terminal residue of the beta subunit is responsible for the nucleophile hydrolase activity.

It is found in the cytoplasm. It carries out the reaction L-asparagine + H2O = L-aspartate + NH4(+). The catalysed reaction is Cleavage of a beta-linked Asp residue from the N-terminus of a polypeptide.. Its function is as follows. Has both L-asparaginase and beta-aspartyl peptidase activity. May be involved in the production of L-aspartate, which can act as an excitatory neurotransmitter in some brain regions. Is highly active with L-Asp beta-methyl ester. Besides, has catalytic activity toward beta-aspartyl dipeptides and their methyl esters, including beta-L-Asp-L-Phe, beta-L-Asp-L-Phe methyl ester (aspartame), beta-L-Asp-L-Ala, beta-L-Asp-L-Leu and beta-L-Asp-L-Lys. Does not have aspartylglucosaminidase activity and is inactive toward GlcNAc-L-Asn. Likewise, has no activity toward glutamine. This is Isoaspartyl peptidase/L-asparaginase (ASRGL1) from Bos taurus (Bovine).